The primary structure comprises 608 residues: Centromere DNA-binding protein complex CBF3 subunit B (608 aa).

Positions 14–42 (CSVCTRRKVKCDRMIPCGNCRKRGQDSEC) form a DNA-binding region, zn(2)-C6 fungal-type. Ser575 is modified (phosphoserine).

In terms of assembly, component of the CBF3 copmplex, which is formed of CBF3A/CBF2, CBF3B/CEP3, CBF3C/CTF13 and CBF3D.

Its subcellular location is the nucleus. It is found in the chromosome. The protein localises to the centromere. Functionally, acts as a component of the centromere DNA-binding protein complex CBF3, which is essential for chromosome segregation and movement of centromeres along microtubules. CBF3 is required for the recruitment of other kinetochore complexes to CEN DNA. It plays a role in the attachment of chromosomes to the spindle and binds selectively to a highly conserved DNA sequence called CDEIII, found in centromers and in several promoters. The protein is Centromere DNA-binding protein complex CBF3 subunit B (CEP3) of Saccharomyces cerevisiae (strain ATCC 204508 / S288c) (Baker's yeast).